Here is a 295-residue protein sequence, read N- to C-terminus: Uridine and thymidine phosphorylase (295 aa).

Phosphate is bound by residues R81 and 125 to 128 (RLGT). The substrate site is built by Q203 and R205.

It belongs to the PNP/UDP phosphorylase family. In terms of tissue distribution, expressed in hypodermis, pharynx, spermatheca and gonad.

The enzyme catalyses uridine + phosphate = alpha-D-ribose 1-phosphate + uracil. It carries out the reaction thymidine + phosphate = 2-deoxy-alpha-D-ribose 1-phosphate + thymine. It catalyses the reaction 2'-deoxyuridine + phosphate = 2-deoxy-alpha-D-ribose 1-phosphate + uracil. It participates in pyrimidine metabolism; UMP biosynthesis via salvage pathway; uracil from uridine (phosphorylase route): step 1/1. The protein operates within pyrimidine metabolism; dTMP biosynthesis via salvage pathway; dTMP from thymine: step 1/2. In terms of biological role, catalyzes the reversible phosphorylytic cleavage of uridine and thymidine to uracil and ribose-phosphate or thymine and deoxyribose-1-phosphate. The produced molecules are then utilized as carbon and energy sources or in the rescue of pyrimidine bases for nucleotide synthesis. Required for normal lifespan. This chain is Uridine and thymidine phosphorylase, found in Caenorhabditis elegans.